The following is a 379-amino-acid chain: MPASKRDYYEVLGVDKKASNDDIKKAYRKLAIKYHPDKNQGDKAAEEKFKEATEAYEILIDEKKRSMYDQFGHAGVDGMSGGGGYDPSAFQGFEDIFGGSFSDIFENLFGGGFSSRSSGFGGRHAGPVRGSNLRYDLQISFVDAVYGKKAELSYTRNEKCSECHGTGSESGSSKRMCPDCKGTGQVRQSTGFFSISRPCPTCGGEGSIIEKPCKKCGGNGLERKKQRIIVTIPAGVENGKRITIPSQGNAGQAGGDYGDLFVFIFVQAHPYFERNGIDLYCAVPISMTQAALGGEINIKSLDEKTLRLKIPAGTQNGKLLRIRGEGVPTGIGRKGDLYIQIQVQIPSKLSSNSKKLLQEISAIEGENENPNLIPLKDLP.

The region spanning 7–72 is the J domain; sequence DYYEVLGVDK…KKRSMYDQFG (66 aa). A CR-type zinc finger spans residues 147–225; the sequence is GKKAELSYTR…CGGNGLERKK (79 aa). Residues cysteine 160, cysteine 163, cysteine 177, cysteine 180, cysteine 199, cysteine 202, cysteine 213, and cysteine 216 each contribute to the Zn(2+) site. 4 CXXCXGXG motif repeats span residues 160–167, 177–184, 199–206, and 213–220; these read CSECHGTG, CPDCKGTG, CPTCGGEG, and CKKCGGNG.

This sequence belongs to the DnaJ family. As to quaternary structure, homodimer. Zn(2+) serves as cofactor.

The protein resides in the cytoplasm. Participates actively in the response to hyperosmotic and heat shock by preventing the aggregation of stress-denatured proteins and by disaggregating proteins, also in an autonomous, DnaK-independent fashion. Unfolded proteins bind initially to DnaJ; upon interaction with the DnaJ-bound protein, DnaK hydrolyzes its bound ATP, resulting in the formation of a stable complex. GrpE releases ADP from DnaK; ATP binding to DnaK triggers the release of the substrate protein, thus completing the reaction cycle. Several rounds of ATP-dependent interactions between DnaJ, DnaK and GrpE are required for fully efficient folding. Also involved, together with DnaK and GrpE, in the DNA replication of plasmids through activation of initiation proteins. The protein is Chaperone protein DnaJ of Treponema denticola (strain ATCC 35405 / DSM 14222 / CIP 103919 / JCM 8153 / KCTC 15104).